The chain runs to 82 residues: Small ribosomal subunit protein bS16 (82 aa).

Belongs to the bacterial ribosomal protein bS16 family.

The polypeptide is Small ribosomal subunit protein bS16 (Methylobacillus flagellatus (strain ATCC 51484 / DSM 6875 / VKM B-1610 / KT)).